A 470-amino-acid chain; its full sequence is Uronate isomerase (470 aa).

It belongs to the metallo-dependent hydrolases superfamily. Uronate isomerase family.

The catalysed reaction is D-glucuronate = D-fructuronate. It carries out the reaction aldehydo-D-galacturonate = keto-D-tagaturonate. It participates in carbohydrate metabolism; pentose and glucuronate interconversion. The protein is Uronate isomerase of Klebsiella pneumoniae (strain 342).